Consider the following 233-residue polypeptide: Large ribosomal subunit protein uL1 (233 aa).

The protein belongs to the universal ribosomal protein uL1 family. Part of the 50S ribosomal subunit.

In terms of biological role, binds directly to 23S rRNA. The L1 stalk is quite mobile in the ribosome, and is involved in E site tRNA release. Its function is as follows. Protein L1 is also a translational repressor protein, it controls the translation of the L11 operon by binding to its mRNA. This chain is Large ribosomal subunit protein uL1, found in Thermotoga sp. (strain RQ2).